We begin with the raw amino-acid sequence, 245 residues long: DNA repair protein RecO (245 aa).

This sequence belongs to the RecO family.

Its function is as follows. Involved in DNA repair and RecF pathway recombination. The protein is DNA repair protein RecO of Porphyromonas gingivalis (strain ATCC BAA-308 / W83).